The primary structure comprises 506 residues: UDP-N-acetylglucosamine--peptide N-acetylglucosaminyltransferase GtfA subunit (506 aa).

The interval 1 to 78 (MTVYNINLGI…FTDIKIAPTT (78 aa)) is N-terminus R-fold-1. Residue 16-19 (GVEY) coordinates UDP. The interval 79–195 (VTLDQVLAQV…LYRFPDRIFY (117 aa)) is extended beta-sheet domain. Residues 196 to 306 (SKAELVRYFL…QPQIATIPVG (111 aa)) form a C-terminus R-fold-1 region. An N-acetyl-D-glucosamine-binding site is contributed by His-242. The R-fold-2 stretch occupies residues 307-506 (SLDQLTYPKE…LKEVRDDSAL (200 aa)). Residues Arg-328, Tyr-357, and 383 to 385 (GHA) each bind UDP. An N-acetyl-D-glucosamine-binding site is contributed by 405–407 (GFG). Thr-409 contacts UDP.

This sequence belongs to the glycosyltransferase group 1 family. Glycosyltransferase 4 subfamily. In terms of assembly, forms a heterotetramer with 2 subunits each of GtfA and GtfB. Part of the accessory SecA2/SecY2 protein translocation apparatus required to export cell wall protein GspB.

Its subcellular location is the cytoplasm. The protein localises to the cell membrane. It carries out the reaction L-seryl-[protein] + UDP-N-acetyl-alpha-D-glucosamine = 3-O-[N-acetyl-alpha-D-glucosaminyl]-L-seryl-[protein] + UDP + H(+). The protein operates within protein modification; protein glycosylation. Functionally, required for polymorphic O-glycosylation of GspB, a serine-rich repeat cell wall protein encoded upstream in the same operon. Catalyzes the first step in glycosylation by transferring N-acetylglucosamine from UDP-GlcNAc to serine residues in GspB. Part of the accessory SecA2/SecY2 system specifically required to export GspB. Upon coexpression in E.coli with GtfB glycosylates GspB constructs. Glycosylation probably occurs intracellularly. Requires GtfB for glycosylation activity, it has no activity alone. Does not use UDP-glucose as substrate. Has a fast, probably processive glycosylation phase followed by a slower, non-processive phase. The enzyme probably modifies its tertiary conformation by opening and closing its intersubunit interfaces to accomodate the increasingly glycosylated substrate; protein substrate recognition is provided by GtfB. The polypeptide is UDP-N-acetylglucosamine--peptide N-acetylglucosaminyltransferase GtfA subunit (Streptococcus gordonii).